A 442-amino-acid chain; its full sequence is GTPase Obg (442 aa).

The Obg domain occupies 1-158 (MFYDQARIFV…HWLELELKLL (158 aa)). Residues 159–329 (ADVGLVGFPN…LIYHVHKGLE (171 aa)) enclose the OBG-type G domain. Residues 165–172 (GFPNVGKS), 190–194 (FTTLE), 212–215 (DIPG), 282–285 (NKMD), and 310–312 (SAA) each bind GTP. The Mg(2+) site is built by serine 172 and threonine 192. The region spanning 349–427 (FTGKTEERFK…IGDLDFDFIE (79 aa)) is the OCT domain.

This sequence belongs to the TRAFAC class OBG-HflX-like GTPase superfamily. OBG GTPase family. In terms of assembly, monomer. Mg(2+) serves as cofactor.

The protein localises to the cytoplasm. Functionally, an essential GTPase which binds GTP, GDP and possibly (p)ppGpp with moderate affinity, with high nucleotide exchange rates and a fairly low GTP hydrolysis rate. Plays a role in control of the cell cycle, stress response, ribosome biogenesis and in those bacteria that undergo differentiation, in morphogenesis control. This is GTPase Obg from Heliobacterium modesticaldum (strain ATCC 51547 / Ice1).